A 415-amino-acid polypeptide reads, in one-letter code: Adenylosuccinate synthetase (415 aa).

Residues 12-18 (GDEGKGK) and 40-42 (GHT) each bind GTP. The active-site Proton acceptor is the Asp-13. Mg(2+) contacts are provided by Asp-13 and Gly-40. IMP contacts are provided by residues 13 to 16 (DEGK), 38 to 41 (NAGH), Thr-125, Arg-139, Gln-219, Thr-234, and Arg-298. His-41 (proton donor) is an active-site residue. 294–300 (TTTGRPR) provides a ligand contact to substrate. GTP-binding positions include Arg-300, 326-328 (KLD), and 404-406 (STG).

Belongs to the adenylosuccinate synthetase family. As to quaternary structure, homodimer. The cofactor is Mg(2+).

The protein resides in the cytoplasm. The enzyme catalyses IMP + L-aspartate + GTP = N(6)-(1,2-dicarboxyethyl)-AMP + GDP + phosphate + 2 H(+). The protein operates within purine metabolism; AMP biosynthesis via de novo pathway; AMP from IMP: step 1/2. Plays an important role in the de novo pathway of purine nucleotide biosynthesis. Catalyzes the first committed step in the biosynthesis of AMP from IMP. This chain is Adenylosuccinate synthetase, found in Wolinella succinogenes (strain ATCC 29543 / DSM 1740 / CCUG 13145 / JCM 31913 / LMG 7466 / NCTC 11488 / FDC 602W) (Vibrio succinogenes).